Here is a 201-residue protein sequence, read N- to C-terminus: Putative ferritin heavy polypeptide-like 19 (201 aa).

The Ferritin-like diiron domain occupies 1–123 (MAFYFDQDDA…GYLSNLHKMG (123 aa)).

It belongs to the ferritin family.

The chain is Putative ferritin heavy polypeptide-like 19 (FTH1P19) from Homo sapiens (Human).